We begin with the raw amino-acid sequence, 334 residues long: DNA polymerase beta (334 aa).

3 residues coordinate K(+): Lys-60, Leu-62, and Val-65. Residues Lys-60, Leu-62, and Val-65 each contribute to the Na(+) site. Lys-72 functions as the Nucleophile; Schiff-base intermediate with DNA; for 5'-dRP lyase activity in the catalytic mechanism. Arg-83 is modified (omega-N-methylarginine; by PRMT6). K(+) is bound by residues Thr-101, Val-103, and Ile-106. Positions 101, 103, and 106 each coordinate Na(+). Arg-149 contacts a 2'-deoxyribonucleoside 5'-triphosphate. Residue Arg-152 is modified to Omega-N-methylarginine; by PRMT6. A 2'-deoxyribonucleoside 5'-triphosphate-binding residues include Ser-180, Arg-183, Gly-189, and Asp-190. Residues 183–192 (RGAESSGDMD) are DNA-binding. 3 residues coordinate Mg(2+): Asp-190, Asp-192, and Asp-255.

It belongs to the DNA polymerase type-X family. As to quaternary structure, monomer. Mg(2+) is required as a cofactor. Post-translationally, methylation by PRMT6 stimulates the polymerase activity by enhancing DNA binding and processivity. In terms of processing, ubiquitinated: monoubiquitinated by huwe1/arf-bp1. Monoubiquitinated protein is then the target of stub1/chip, which catalyzes polyubiquitination from monoubiquitin, leading to degradation by the proteasome. usp47 mediates the deubiquitination of monoubiquitinated protein, preventing polyubiquitination by STUB1/CHIP and its subsequent degradation.

It localises to the nucleus. The protein localises to the cytoplasm. It catalyses the reaction DNA(n) + a 2'-deoxyribonucleoside 5'-triphosphate = DNA(n+1) + diphosphate. It carries out the reaction a 5'-end 2'-deoxyribose-2'-deoxyribonucleotide-DNA = (2E,4S)-4-hydroxypenten-2-al-5-phosphate + a 5'-end 5'-phospho-2'-deoxyribonucleoside-DNA + H(+). The enzyme catalyses 2'-deoxyribonucleotide-(2'-deoxyribose 5'-phosphate)-2'-deoxyribonucleotide-DNA = a 3'-end 2'-deoxyribonucleotide-(2,3-dehydro-2,3-deoxyribose 5'-phosphate)-DNA + a 5'-end 5'-phospho-2'-deoxyribonucleoside-DNA + H(+). Repair polymerase that plays a key role in base-excision repair. During this process, the damaged base is excised by specific DNA glycosylases, the DNA backbone is nicked at the abasic site by an apurinic/apyrimidic (AP) endonuclease, and POLB removes 5'-deoxyribose-phosphate from the preincised AP site acting as a 5'-deoxyribose-phosphate lyase (5'-dRP lyase); through its DNA polymerase activity, it adds one nucleotide to the 3' end of the arising single-nucleotide gap. Conducts 'gap-filling' DNA synthesis in a stepwise distributive fashion rather than in a processive fashion as for other DNA polymerases. It is also able to cleave sugar-phosphate bonds 3' to an intact AP site, acting as an AP lyase. The chain is DNA polymerase beta (polb) from Xenopus laevis (African clawed frog).